Consider the following 526-residue polypeptide: ATP synthase subunit alpha (526 aa).

178–185 (GDRQTGKT) is a binding site for ATP.

It belongs to the ATPase alpha/beta chains family. F-type ATPases have 2 components, CF(1) - the catalytic core - and CF(0) - the membrane proton channel. CF(1) has five subunits: alpha(3), beta(3), gamma(1), delta(1), epsilon(1). CF(0) has four main subunits: a(1), b(1), b'(1) and c(9-12).

The protein localises to the cell membrane. The enzyme catalyses ATP + H2O + 4 H(+)(in) = ADP + phosphate + 5 H(+)(out). Produces ATP from ADP in the presence of a proton gradient across the membrane. The alpha chain is a regulatory subunit. This chain is ATP synthase subunit alpha, found in Roseiflexus castenholzii (strain DSM 13941 / HLO8).